We begin with the raw amino-acid sequence, 350 residues long: ALA-interacting subunit 5 (350 aa).

Residues Met1–Lys23 form a disordered region. Ser2 is modified (N-acetylserine). A helical membrane pass occupies residues Val50–Phe70. 2 N-linked (GlcNAc...) asparagine glycosylation sites follow: Asn181 and Asn231. A helical transmembrane segment spans residues Phe304–Ala324.

This sequence belongs to the CDC50/LEM3 family. As to quaternary structure, interacts with ALA2 and ALA3 in a heterologous system. As to expression, expressed in roots, leaves, stems, flowers and siliques.

It is found in the golgi apparatus membrane. It localises to the prevacuolar compartment membrane. Its subcellular location is the endoplasmic reticulum membrane. Its function is as follows. Required for the lipid transport activity of the ALA/ALIS P4-ATPase complex. The polypeptide is ALA-interacting subunit 5 (ALIS5) (Arabidopsis thaliana (Mouse-ear cress)).